We begin with the raw amino-acid sequence, 205 residues long: Beta-crystallin B2 (205 aa).

A2 carries the N-acetylalanine modification. The interval A2–N16 is N-terminal arm. Beta/gamma crystallin 'Greek key' domains lie at P17–A56 and G57–K101. Positions V102–E106 are connecting peptide. Beta/gamma crystallin 'Greek key' domains are found at residues H107 to S148 and G149 to R191. Positions M193–S205 are C-terminal arm.

This sequence belongs to the beta/gamma-crystallin family. As to quaternary structure, homo/heterodimer, or complexes of higher-order. The structure of beta-crystallin oligomers seems to be stabilized through interactions between the N-terminal arms.

Its function is as follows. Crystallins are the dominant structural components of the vertebrate eye lens. This Mesocricetus auratus (Golden hamster) protein is Beta-crystallin B2 (CRYBB2).